Consider the following 399-residue polypeptide: Mannan endo-1,4-beta-mannosidase 4 (399 aa).

The N-terminal stretch at 1-26 (MNNSIILIFVAILIIFPNEFSKPTRA) is a signal peptide. Substrate contacts are provided by tryptophan 88 and asparagine 203. Glutamate 204 serves as the catalytic Proton donor. Position 279 (tyrosine 279) interacts with substrate. Glutamate 318 acts as the Nucleophile in catalysis. A disulfide bridge links cysteine 347 with cysteine 354. Residue tryptophan 360 coordinates substrate.

The protein belongs to the glycosyl hydrolase 5 (cellulase A) family. Expressed in flowers and fruit pericarp.

Its subcellular location is the secreted. It catalyses the reaction Random hydrolysis of (1-&gt;4)-beta-D-mannosidic linkages in mannans, galactomannans and glucomannans.. Functionally, possesses endo-beta-mannanase and mannan transglycosylase activities. May be involved in cell wall degradation during fruit ripening. The polypeptide is Mannan endo-1,4-beta-mannosidase 4 (MAN4) (Solanum lycopersicum (Tomato)).